We begin with the raw amino-acid sequence, 484 residues long: Regulatory protein ViaA (484 aa).

It belongs to the ViaA family. Homodimer. Interacts with RavA.

The protein resides in the cytoplasm. Its function is as follows. Component of the RavA-ViaA chaperone complex, which may act on the membrane to optimize the function of some of the respiratory chains. ViaA stimulates the ATPase activity of RavA. This is Regulatory protein ViaA from Edwardsiella ictaluri (strain 93-146).